We begin with the raw amino-acid sequence, 362 residues long: Peptide chain release factor 1 (362 aa).

Gln237 carries the N5-methylglutamine modification.

It belongs to the prokaryotic/mitochondrial release factor family. Methylated by PrmC. Methylation increases the termination efficiency of RF1.

It localises to the cytoplasm. Functionally, peptide chain release factor 1 directs the termination of translation in response to the peptide chain termination codons UAG and UAA. The protein is Peptide chain release factor 1 of Vibrio vulnificus (strain CMCP6).